The following is a 920-amino-acid chain: Protein O-mannosyl-transferase TMTC3 (920 aa).

Topologically, residues Met-1–Val-14 are cytoplasmic. Residues Thr-15–Phe-35 traverse the membrane as a helical segment. The Extracellular portion of the chain corresponds to Asp-36 to Pro-94. A helical transmembrane segment spans residues Met-95–Val-115. The Cytoplasmic portion of the chain corresponds to Cys-116–Ser-125. 2 consecutive transmembrane segments (helical) span residues Met-126–Gly-144 and Val-145–Ser-163. Topologically, residues Tyr-164–Asp-171 are cytoplasmic. A helical membrane pass occupies residues Asn-172–Cys-192. Over Lys-193–Thr-198 the chain is Extracellular. Residues Val-199–Leu-219 traverse the membrane as a helical segment. The Cytoplasmic segment spans residues Cys-220–Ser-236. Residues Met-237–Val-257 traverse the membrane as a helical segment. At Arg-258–Asn-325 the chain is on the extracellular side. A helical transmembrane segment spans residues Leu-326–Pro-346. The Cytoplasmic portion of the chain corresponds to Gly-347–Cys-358. A helical transmembrane segment spans residues Leu-359 to Ala-379. The Extracellular portion of the chain corresponds to Glu-380 to Arg-381. Residues Val-382–Ser-402 traverse the membrane as a helical segment. At Asn-403–Lys-409 the chain is on the cytoplasmic side. A helical membrane pass occupies residues Leu-410 to His-428. Topologically, residues Arg-429 to Glu-920 are extracellular. TPR repeat units follow at residues Ala-451–Asp-484, Ile-485–Ile-518, Asn-534–Phe-567, Lys-568–Asn-601, Ala-602–His-635, Ala-673–Phe-706, Arg-707–His-740, Lys-742–Asn-775, and Val-776–Glu-809. Asn-499 carries an N-linked (GlcNAc...) asparagine glycan. Tyr-508 is modified (phosphotyrosine). Residue Asn-546 is glycosylated (N-linked (GlcNAc...) asparagine). Positions Val-829–Lys-897 are disordered. Positions Pro-840–Ser-858 are enriched in basic and acidic residues. Over residues Lys-867–Ser-880 the composition is skewed to low complexity. A compositionally biased stretch (basic and acidic residues) spans Asp-887–Lys-897.

Belongs to the TMTC family.

The protein localises to the membrane. The protein resides in the endoplasmic reticulum. It catalyses the reaction a di-trans,poly-cis-dolichyl beta-D-mannosyl phosphate + L-seryl-[protein] = 3-O-(alpha-D-mannosyl)-L-seryl-[protein] + a di-trans,poly-cis-dolichyl phosphate + H(+). The catalysed reaction is a di-trans,poly-cis-dolichyl beta-D-mannosyl phosphate + L-threonyl-[protein] = 3-O-(alpha-D-mannosyl)-L-threonyl-[protein] + a di-trans,poly-cis-dolichyl phosphate + H(+). It participates in protein modification; protein glycosylation. Transfers mannosyl residues to the hydroxyl group of serine or threonine residues. The 4 members of the TMTC family are O-mannosyl-transferases dedicated primarily to the cadherin superfamily, each member seems to have a distinct role in decorating the cadherin domains with O-linked mannose glycans at specific regions. Also acts as O-mannosyl-transferase on other proteins such as PDIA3. Involved in the positive regulation of proteasomal protein degradation in the endoplasmic reticulum (ER), and the control of ER stress response. This Mus musculus (Mouse) protein is Protein O-mannosyl-transferase TMTC3.